The chain runs to 309 residues: Methionyl-tRNA formyltransferase (309 aa).

109–112 is a (6S)-5,6,7,8-tetrahydrofolate binding site; sequence SLLP.

This sequence belongs to the Fmt family.

It carries out the reaction L-methionyl-tRNA(fMet) + (6R)-10-formyltetrahydrofolate = N-formyl-L-methionyl-tRNA(fMet) + (6S)-5,6,7,8-tetrahydrofolate + H(+). Attaches a formyl group to the free amino group of methionyl-tRNA(fMet). The formyl group appears to play a dual role in the initiator identity of N-formylmethionyl-tRNA by promoting its recognition by IF2 and preventing the misappropriation of this tRNA by the elongation apparatus. The protein is Methionyl-tRNA formyltransferase of Clostridium novyi (strain NT).